Here is a 99-residue protein sequence, read N- to C-terminus: Large ribosomal subunit protein uL23 (99 aa).

This sequence belongs to the universal ribosomal protein uL23 family. In terms of assembly, part of the 50S ribosomal subunit. Contacts protein L29, and trigger factor when it is bound to the ribosome.

Its function is as follows. One of the early assembly proteins it binds 23S rRNA. One of the proteins that surrounds the polypeptide exit tunnel on the outside of the ribosome. Forms the main docking site for trigger factor binding to the ribosome. The sequence is that of Large ribosomal subunit protein uL23 from Azotobacter vinelandii (strain DJ / ATCC BAA-1303).